We begin with the raw amino-acid sequence, 204 residues long: MKISKRQQDIYEFIKSEVKEKGYPPSVREIGEAVGLASSSTVHGHLARLEGKGLIRRDPTKPRAIEILSLEDEAETPNVVNIPIIGKVTAGMPITAIENIEEYFPLPEYMAAGETNVFMLEIDGESMINAGILDGDKVIVRQQNSAINGEIVVAMTDENEATCKRFYKEANHFRLQPENDALEPIILNNVTILGKVIGLYRDIR.

A DNA-binding region (H-T-H motif) is located at residues 27-47; that stretch reads VREIGEAVGLASSSTVHGHLA. Active-site for autocatalytic cleavage activity residues include S126 and K164.

This sequence belongs to the peptidase S24 family. In terms of assembly, homodimer.

It catalyses the reaction Hydrolysis of Ala-|-Gly bond in repressor LexA.. In terms of biological role, represses a number of genes involved in the response to DNA damage (SOS response), including recA and lexA. In the presence of single-stranded DNA, RecA interacts with LexA causing an autocatalytic cleavage which disrupts the DNA-binding part of LexA, leading to derepression of the SOS regulon and eventually DNA repair. This chain is LexA repressor, found in Listeria welshimeri serovar 6b (strain ATCC 35897 / DSM 20650 / CCUG 15529 / CIP 8149 / NCTC 11857 / SLCC 5334 / V8).